A 373-amino-acid chain; its full sequence is MPLINLPEFASDLLAEFDARKVERIDTPVIQPAEPFLDIAGEDLRRRIFMTESETGASLCLRPEFTIPVCLRHIETATGTPKRYAYLGEVFRQRRDGANEFYQAGIEDLGDINIPSADARAIGDATGILARLLPGRRLSVTLGDQAVFEAVVQALGLPLGWQKRLIHAFGNMTQLEALLAGLVSPQFVTGLDDDVAKLVASGDEQALVSHLEQEMQATGYSANAGRSPLEIARRLKEKLILSETRLDDAAFHVLEEFLSLDVPLVNASAALAGFADAAGLKLGNALSRFNGRVAALADAGVDLSCLDYRAAFGRPLDYYTGLVFEVTVEGSAAVLAGGGRFDKLLTFLGATDRIPAVGFSFWLDRIETERAAV.

Belongs to the class-II aminoacyl-tRNA synthetase family. HisZ subfamily. As to quaternary structure, heteromultimer composed of HisG and HisZ subunits.

The protein resides in the cytoplasm. The protein operates within amino-acid biosynthesis; L-histidine biosynthesis; L-histidine from 5-phospho-alpha-D-ribose 1-diphosphate: step 1/9. Its function is as follows. Required for the first step of histidine biosynthesis. May allow the feedback regulation of ATP phosphoribosyltransferase activity by histidine. The sequence is that of ATP phosphoribosyltransferase regulatory subunit from Rhizobium leguminosarum bv. trifolii (strain WSM2304).